The following is a 138-amino-acid chain: Thyrotropin subunit beta (138 aa).

The signal sequence occupies residues Met1 to Ser20. Cystine bridges form between Cys22–Cys72, Cys36–Cys87, Cys39–Cys125, Cys47–Cys103, Cys51–Cys105, and Cys108–Cys115. The N-linked (GlcNAc...) asparagine glycan is linked to Asn43. A propeptide spanning residues Val133–Ile138 is cleaved from the precursor.

This sequence belongs to the glycoprotein hormones subunit beta family. In terms of assembly, heterodimer of a common alpha chain and a unique beta chain which confers biological specificity to thyrotropin, lutropin, follitropin and gonadotropin.

The protein localises to the secreted. Functionally, indispensable for the control of thyroid structure and metabolism. The protein is Thyrotropin subunit beta (TSHB) of Canis lupus familiaris (Dog).